We begin with the raw amino-acid sequence, 574 residues long: Proline--tRNA ligase (574 aa).

Belongs to the class-II aminoacyl-tRNA synthetase family. ProS type 1 subfamily. As to quaternary structure, homodimer.

The protein localises to the cytoplasm. The enzyme catalyses tRNA(Pro) + L-proline + ATP = L-prolyl-tRNA(Pro) + AMP + diphosphate. Functionally, catalyzes the attachment of proline to tRNA(Pro) in a two-step reaction: proline is first activated by ATP to form Pro-AMP and then transferred to the acceptor end of tRNA(Pro). As ProRS can inadvertently accommodate and process non-cognate amino acids such as alanine and cysteine, to avoid such errors it has two additional distinct editing activities against alanine. One activity is designated as 'pretransfer' editing and involves the tRNA(Pro)-independent hydrolysis of activated Ala-AMP. The other activity is designated 'posttransfer' editing and involves deacylation of mischarged Ala-tRNA(Pro). The misacylated Cys-tRNA(Pro) is not edited by ProRS. The sequence is that of Proline--tRNA ligase from Buchnera aphidicola subsp. Baizongia pistaciae (strain Bp).